The sequence spans 151 residues: UPF0719 transmembrane protein MAP_1032c (151 aa).

A run of 4 helical transmembrane segments spans residues 20–40 (VATI…FYAV), 60–80 (AVVV…TAIA), 90–110 (LVGV…ALLA), and 130–150 (PGSF…AAAV).

This sequence belongs to the UPF0719 family.

Its subcellular location is the cell membrane. The polypeptide is UPF0719 transmembrane protein MAP_1032c (Mycolicibacterium paratuberculosis (strain ATCC BAA-968 / K-10) (Mycobacterium paratuberculosis)).